Consider the following 254-residue polypeptide: Imidazole glycerol phosphate synthase subunit HisF (254 aa).

Active-site residues include D11 and D130.

It belongs to the HisA/HisF family. In terms of assembly, heterodimer of HisH and HisF.

It is found in the cytoplasm. It carries out the reaction 5-[(5-phospho-1-deoxy-D-ribulos-1-ylimino)methylamino]-1-(5-phospho-beta-D-ribosyl)imidazole-4-carboxamide + L-glutamine = D-erythro-1-(imidazol-4-yl)glycerol 3-phosphate + 5-amino-1-(5-phospho-beta-D-ribosyl)imidazole-4-carboxamide + L-glutamate + H(+). It participates in amino-acid biosynthesis; L-histidine biosynthesis; L-histidine from 5-phospho-alpha-D-ribose 1-diphosphate: step 5/9. IGPS catalyzes the conversion of PRFAR and glutamine to IGP, AICAR and glutamate. The HisF subunit catalyzes the cyclization activity that produces IGP and AICAR from PRFAR using the ammonia provided by the HisH subunit. In Laribacter hongkongensis (strain HLHK9), this protein is Imidazole glycerol phosphate synthase subunit HisF.